The sequence spans 521 residues: Glucose-6-phosphate isomerase (521 aa).

E351 acts as the Proton donor in catalysis. Active-site residues include H382 and K491.

Belongs to the GPI family.

The protein resides in the cytoplasm. The enzyme catalyses alpha-D-glucose 6-phosphate = beta-D-fructose 6-phosphate. Its pathway is carbohydrate biosynthesis; gluconeogenesis. It functions in the pathway carbohydrate degradation; glycolysis; D-glyceraldehyde 3-phosphate and glycerone phosphate from D-glucose: step 2/4. Functionally, catalyzes the reversible isomerization of glucose-6-phosphate to fructose-6-phosphate. This is Glucose-6-phosphate isomerase from Polaromonas naphthalenivorans (strain CJ2).